Here is a 477-residue protein sequence, read N- to C-terminus: Glutamyl-tRNA(Gln) amidotransferase subunit A (477 aa).

Catalysis depends on charge relay system residues lysine 76 and serine 151. Serine 175 acts as the Acyl-ester intermediate in catalysis.

Belongs to the amidase family. GatA subfamily. In terms of assembly, heterotrimer of A, B and C subunits.

The enzyme catalyses L-glutamyl-tRNA(Gln) + L-glutamine + ATP + H2O = L-glutaminyl-tRNA(Gln) + L-glutamate + ADP + phosphate + H(+). Its function is as follows. Allows the formation of correctly charged Gln-tRNA(Gln) through the transamidation of misacylated Glu-tRNA(Gln) in organisms which lack glutaminyl-tRNA synthetase. The reaction takes place in the presence of glutamine and ATP through an activated gamma-phospho-Glu-tRNA(Gln). In Prosthecochloris aestuarii (strain DSM 271 / SK 413), this protein is Glutamyl-tRNA(Gln) amidotransferase subunit A.